We begin with the raw amino-acid sequence, 352 residues long: Thymidine kinase (352 aa).

26–33 (GSMGIGKT) is an ATP binding site. Glu54 acts as the Proton acceptor in catalysis. Gln95 contributes to the substrate binding site. An ATP-binding site is contributed by Arg185. Arg191 contacts substrate.

This sequence belongs to the herpesviridae thymidine kinase family. In terms of assembly, homodimer.

It catalyses the reaction thymidine + ATP = dTMP + ADP + H(+). In terms of biological role, catalyzes the transfer of the gamma-phospho group of ATP to thymidine to generate dTMP in the salvage pathway of pyrimidine synthesis. The dTMP serves as a substrate for DNA polymerase during viral DNA replication. Allows the virus to be reactivated and to grow in non-proliferative cells lacking a high concentration of phosphorylated nucleic acid precursors. The polypeptide is Thymidine kinase (Gallid herpesvirus 2 (strain Chicken/Md5/ATCC VR-987) (GaHV-2)).